The chain runs to 137 residues: Basic phospholipase A2 homolog W6D49 (137 aa).

A signal peptide spans 1–16 (MRTLWILAVLLVSVDG). 7 disulfide bridges follow: C42–C131, C44–C60, C59–C111, C65–C137, C66–C104, C73–C97, and C91–C102. An important for membrane-damaging activities in eukaryotes and bacteria; heparin-binding region spans residues 121 to 133 (KKQQFNTGIFCSK).

In terms of assembly, monomer. Expressed by the venom gland.

Its subcellular location is the secreted. With respect to regulation, heparin reduces its edema-inducing activity. Functionally, snake venom phospholipase A2 homolog that lacks enzymatic activity. Shows myotoxin activities and displays edema-inducing activities. A model of myotoxic mechanism has been proposed: an apo Lys49-PLA2 is activated by the entrance of a hydrophobic molecule (e.g. fatty acid) at the hydrophobic channel of the protein leading to a reorientation of a monomer. This reorientation causes a transition between 'inactive' to 'active' states, causing alignment of C-terminal and membrane-docking sites (MDoS) side-by-side and putting the membrane-disruption sites (MDiS) in the same plane, exposed to solvent and in a symmetric position for both monomers. The MDoS region stabilizes the toxin on membrane by the interaction of charged residues with phospholipid head groups. Subsequently, the MDiS region destabilizes the membrane with penetration of hydrophobic residues. This insertion causes a disorganization of the membrane, allowing an uncontrolled influx of ions (i.e. calcium and sodium), and eventually triggering irreversible intracellular alterations and cell death. This is Basic phospholipase A2 homolog W6D49 from Calloselasma rhodostoma (Malayan pit viper).